The sequence spans 469 residues: tRNA-2-methylthio-N(6)-dimethylallyladenosine synthase (469 aa).

In terms of domain architecture, MTTase N-terminal spans 22 to 142; that stretch reads RKVFIKTYGC…LPEALRRAQQ (121 aa). [4Fe-4S] cluster-binding residues include C31, C67, C105, C183, C187, and C190. Residues 169–401 form the Radical SAM core domain; sequence RARGVTAFLT…QALLLKQQQE (233 aa). A TRAM domain is found at 404-466; that stretch reads ESCIGKEIDL…TNSLFAERAE (63 aa).

This sequence belongs to the methylthiotransferase family. MiaB subfamily. In terms of assembly, monomer. It depends on [4Fe-4S] cluster as a cofactor.

It is found in the cytoplasm. The enzyme catalyses N(6)-dimethylallyladenosine(37) in tRNA + (sulfur carrier)-SH + AH2 + 2 S-adenosyl-L-methionine = 2-methylsulfanyl-N(6)-dimethylallyladenosine(37) in tRNA + (sulfur carrier)-H + 5'-deoxyadenosine + L-methionine + A + S-adenosyl-L-homocysteine + 2 H(+). Its function is as follows. Catalyzes the methylthiolation of N6-(dimethylallyl)adenosine (i(6)A), leading to the formation of 2-methylthio-N6-(dimethylallyl)adenosine (ms(2)i(6)A) at position 37 in tRNAs that read codons beginning with uridine. The protein is tRNA-2-methylthio-N(6)-dimethylallyladenosine synthase of Rhizobium etli (strain CIAT 652).